A 121-amino-acid polypeptide reads, in one-letter code: Alpha-lactalbumin (121 aa).

Residues 1 to 121 (IDYRKCQASQ…CLEDLDQWRC (121 aa)) enclose the C-type lysozyme domain. Cystine bridges form between C6–C121, C28–C112, C61–C77, and C73–C91. N-linked (GlcNAc...) asparagine glycosylation occurs at N44. Positions 79, 82, 84, 87, and 88 each coordinate Ca(2+).

It belongs to the glycosyl hydrolase 22 family. As to quaternary structure, lactose synthase (LS) is a heterodimer of a catalytic component, beta1,4-galactosyltransferase (beta4Gal-T1) and a regulatory component, alpha-lactalbumin (LA). Mammary gland specific. Secreted in milk.

The protein resides in the secreted. Functionally, regulatory subunit of lactose synthase, changes the substrate specificity of galactosyltransferase in the mammary gland making glucose a good acceptor substrate for this enzyme. This enables LS to synthesize lactose, the major carbohydrate component of milk. In other tissues, galactosyltransferase transfers galactose onto the N-acetylglucosamine of the oligosaccharide chains in glycoproteins. The chain is Alpha-lactalbumin (LALBA) from Notamacropus rufogriseus (Red-necked wallaby).